The following is a 78-amino-acid chain: Leukemia-associated protein 1 (78 aa).

May act as a tumor suppressor. The polypeptide is Leukemia-associated protein 1 (DLEU1) (Homo sapiens (Human)).